Here is a 619-residue protein sequence, read N- to C-terminus: Dihydroxy-acid dehydratase (619 aa).

Residue Asp-81 coordinates Mg(2+). Cys-122 contacts [2Fe-2S] cluster. Residues Asp-123 and Lys-124 each contribute to the Mg(2+) site. Lys-124 is subject to N6-carboxylysine. Cys-195 serves as a coordination point for [2Fe-2S] cluster. Glu-491 is a Mg(2+) binding site. Ser-517 acts as the Proton acceptor in catalysis.

Belongs to the IlvD/Edd family. In terms of assembly, homodimer. [2Fe-2S] cluster serves as cofactor. The cofactor is Mg(2+).

It catalyses the reaction (2R)-2,3-dihydroxy-3-methylbutanoate = 3-methyl-2-oxobutanoate + H2O. The enzyme catalyses (2R,3R)-2,3-dihydroxy-3-methylpentanoate = (S)-3-methyl-2-oxopentanoate + H2O. It functions in the pathway amino-acid biosynthesis; L-isoleucine biosynthesis; L-isoleucine from 2-oxobutanoate: step 3/4. The protein operates within amino-acid biosynthesis; L-valine biosynthesis; L-valine from pyruvate: step 3/4. In terms of biological role, functions in the biosynthesis of branched-chain amino acids. Catalyzes the dehydration of (2R,3R)-2,3-dihydroxy-3-methylpentanoate (2,3-dihydroxy-3-methylvalerate) into 2-oxo-3-methylpentanoate (2-oxo-3-methylvalerate) and of (2R)-2,3-dihydroxy-3-methylbutanoate (2,3-dihydroxyisovalerate) into 2-oxo-3-methylbutanoate (2-oxoisovalerate), the penultimate precursor to L-isoleucine and L-valine, respectively. The polypeptide is Dihydroxy-acid dehydratase (Sphingopyxis alaskensis (strain DSM 13593 / LMG 18877 / RB2256) (Sphingomonas alaskensis)).